A 102-amino-acid polypeptide reads, in one-letter code: Small ribosomal subunit protein eS24 (102 aa).

It belongs to the eukaryotic ribosomal protein eS24 family.

This Halorubrum lacusprofundi (strain ATCC 49239 / DSM 5036 / JCM 8891 / ACAM 34) protein is Small ribosomal subunit protein eS24.